The sequence spans 131 residues: Small ribosomal subunit protein eS8 (131 aa).

A disordered region spans residues 1–42 (MKLGAYYKGGDLKKPSGGKKRKVRKTKKKALGGGPPQIPKLG). Residues 16-30 (SGGKKRKVRKTKKKA) are compositionally biased toward basic residues.

The protein belongs to the eukaryotic ribosomal protein eS8 family. Part of the 30S ribosomal subunit.

The polypeptide is Small ribosomal subunit protein eS8 (Pyrobaculum aerophilum (strain ATCC 51768 / DSM 7523 / JCM 9630 / CIP 104966 / NBRC 100827 / IM2)).